The following is a 139-amino-acid chain: Endoribonuclease YbeY (139 aa).

3 residues coordinate Zn(2+): histidine 99, histidine 103, and histidine 109.

Belongs to the endoribonuclease YbeY family. Zn(2+) serves as cofactor.

Its subcellular location is the cytoplasm. Its function is as follows. Single strand-specific metallo-endoribonuclease involved in late-stage 70S ribosome quality control and in maturation of the 3' terminus of the 16S rRNA. The protein is Endoribonuclease YbeY of Nautilia profundicola (strain ATCC BAA-1463 / DSM 18972 / AmH).